A 442-amino-acid polypeptide reads, in one-letter code: Na(+)/H(+) antiporter NhaA (442 aa).

The next 11 membrane-spanning stretches (helical) occupy residues 32–52 (IGGGLLLAATVLALGWANSPW), 73–93 (LTLAQWAADGLLAIFFFVAGL), 111–131 (AVPVLAACGGVAVPAVLYALV), 139–159 (AGWAIPTATDIAFALAVLAVI), 170–190 (FLLTLAVVDDLLAIVIIAVVY), 193–213 (HLSILPLLGALVPLALFTLLV), 234–254 (VHASGVHATVAGVLLGFAVPV), 284–304 (VAVPIFAFFSAGVTVDGLSGL), 316–336 (VVLGLVVGKPLGIMAATFLVA), 352–372 (VLGLAVLAGIGFTVSLLIGEL), and 383–403 (HVKIAVLTGSLLAALLAAVVL). The span at 423 to 435 (HDGIPDVYQDLHR) shows a compositional bias: basic and acidic residues. The tract at residues 423–442 (HDGIPDVYQDLHRSSPRPWG) is disordered.

It belongs to the NhaA Na(+)/H(+) (TC 2.A.33) antiporter family.

Its subcellular location is the cell membrane. The catalysed reaction is Na(+)(in) + 2 H(+)(out) = Na(+)(out) + 2 H(+)(in). Functionally, na(+)/H(+) antiporter that extrudes sodium in exchange for external protons. This Frankia casuarinae (strain DSM 45818 / CECT 9043 / HFP020203 / CcI3) protein is Na(+)/H(+) antiporter NhaA.